A 510-amino-acid chain; its full sequence is NAD(P)H-quinone oxidoreductase subunit 2 A, chloroplastic (510 aa).

14 helical membrane passes run 31–51 (FIFP…IDLT), 59–79 (WFYF…LFRW), 99–119 (IFQF…VEYI), 124–144 (MAIT…MFLC), 149–169 (LITI…LSGY), 184–204 (LLMG…LYGL), 229–249 (ISIA…LAPF), 261–281 (PTPV…ALAT), 295–315 (WHLL…LLAI), 323–343 (MLAY…IVGD), 354–374 (YMLF…LFGL), 395–415 (ALSL…AGFF), 418–438 (LYLF…IGLL), and 484–504 (MTVC…ILAI).

Belongs to the complex I subunit 2 family. NDH is composed of at least 16 different subunits, 5 of which are encoded in the nucleus.

It is found in the plastid. Its subcellular location is the chloroplast thylakoid membrane. It carries out the reaction a plastoquinone + NADH + (n+1) H(+)(in) = a plastoquinol + NAD(+) + n H(+)(out). The enzyme catalyses a plastoquinone + NADPH + (n+1) H(+)(in) = a plastoquinol + NADP(+) + n H(+)(out). Functionally, NDH shuttles electrons from NAD(P)H:plastoquinone, via FMN and iron-sulfur (Fe-S) centers, to quinones in the photosynthetic chain and possibly in a chloroplast respiratory chain. The immediate electron acceptor for the enzyme in this species is believed to be plastoquinone. Couples the redox reaction to proton translocation, and thus conserves the redox energy in a proton gradient. The polypeptide is NAD(P)H-quinone oxidoreductase subunit 2 A, chloroplastic (Saccharum hybrid (Sugarcane)).